We begin with the raw amino-acid sequence, 360 residues long: DNA polymerase IV (360 aa).

The region spanning 8-191 is the UmuC domain; the sequence is VLHVDMDSFF…LPVGRIPGIG (184 aa). Residues D12 and D110 each contribute to the Mg(2+) site. E111 is a catalytic residue.

The protein belongs to the DNA polymerase type-Y family. In terms of assembly, monomer. It depends on Mg(2+) as a cofactor.

The protein resides in the cytoplasm. The catalysed reaction is DNA(n) + a 2'-deoxyribonucleoside 5'-triphosphate = DNA(n+1) + diphosphate. Its function is as follows. Poorly processive, error-prone DNA polymerase involved in untargeted mutagenesis. Copies undamaged DNA at stalled replication forks, which arise in vivo from mismatched or misaligned primer ends. These misaligned primers can be extended by PolIV. Exhibits no 3'-5' exonuclease (proofreading) activity. May be involved in translesional synthesis. This Methanoculleus marisnigri (strain ATCC 35101 / DSM 1498 / JR1) protein is DNA polymerase IV.